We begin with the raw amino-acid sequence, 417 residues long: Queuine tRNA-ribosyltransferase accessory subunit 2 (417 aa).

Zn(2+)-binding residues include C324, C326, C329, and H355.

The protein belongs to the queuine tRNA-ribosyltransferase family. QTRT2 subfamily. As to quaternary structure, heterodimer of a catalytic subunit and an accessory subunit. Zn(2+) is required as a cofactor.

It localises to the cytoplasm. Functionally, non-catalytic subunit of the queuine tRNA-ribosyltransferase (TGT) that catalyzes the base-exchange of a guanine (G) residue with queuine (Q) at position 34 (anticodon wobble position) in tRNAs with GU(N) anticodons (tRNA-Asp, -Asn, -His and -Tyr), resulting in the hypermodified nucleoside queuosine (7-(((4,5-cis-dihydroxy-2-cyclopenten-1-yl)amino)methyl)-7-deazaguanosine). This is Queuine tRNA-ribosyltransferase accessory subunit 2 from Drosophila pseudoobscura pseudoobscura (Fruit fly).